A 118-amino-acid chain; its full sequence is Large ribosomal subunit protein bL20 (118 aa).

Belongs to the bacterial ribosomal protein bL20 family.

Binds directly to 23S ribosomal RNA and is necessary for the in vitro assembly process of the 50S ribosomal subunit. It is not involved in the protein synthesizing functions of that subunit. This is Large ribosomal subunit protein bL20 from Pseudoalteromonas atlantica (strain T6c / ATCC BAA-1087).